Consider the following 215-residue polypeptide: LexA repressor (215 aa).

Positions R28–R48 form a DNA-binding region, H-T-H motif. Active-site for autocatalytic cleavage activity residues include S133 and K170.

Belongs to the peptidase S24 family. Homodimer.

It carries out the reaction Hydrolysis of Ala-|-Gly bond in repressor LexA.. Functionally, represses a number of genes involved in the response to DNA damage (SOS response), including recA and lexA. In the presence of single-stranded DNA, RecA interacts with LexA causing an autocatalytic cleavage which disrupts the DNA-binding part of LexA, leading to derepression of the SOS regulon and eventually DNA repair. The sequence is that of LexA repressor from Burkholderia mallei (strain NCTC 10247).